The chain runs to 436 residues: Anhydro-N-acetylmuramic acid kinase (436 aa).

32-39 lines the ATP pocket; that stretch reads GTSLDGMD.

This sequence belongs to the anhydro-N-acetylmuramic acid kinase family.

It catalyses the reaction 1,6-anhydro-N-acetyl-beta-muramate + ATP + H2O = N-acetyl-D-muramate 6-phosphate + ADP + H(+). The protein operates within amino-sugar metabolism; 1,6-anhydro-N-acetylmuramate degradation. Its pathway is cell wall biogenesis; peptidoglycan recycling. Functionally, catalyzes the specific phosphorylation of 1,6-anhydro-N-acetylmuramic acid (anhMurNAc) with the simultaneous cleavage of the 1,6-anhydro ring, generating MurNAc-6-P. Is required for the utilization of anhMurNAc either imported from the medium or derived from its own cell wall murein, and thus plays a role in cell wall recycling. The polypeptide is Anhydro-N-acetylmuramic acid kinase (Psychrobacter arcticus (strain DSM 17307 / VKM B-2377 / 273-4)).